Here is a 187-residue protein sequence, read N- to C-terminus: Proenkephalin-A (187 aa).

Propeptides lie at residues 52-70 (MDEL…EILA), 80-143 (DAEE…KMLQ), 153-163 (VGRPEWWMDYQ), and 173-187 (FADS…ESYS). Positions 81–132 (AEEEEDALASSSDLLKELLGPGETETAAAPRGRDDEDVSKSHGGFMRALKGS) are disordered. Positions 88-99 (LASSSDLLKELL) are enriched in low complexity. A compositionally biased stretch (basic and acidic residues) spans 111 to 120 (RGRDDEDVSK). S187 is subject to Phosphoserine.

Belongs to the opioid neuropeptide precursor family. Processed and degraded by ACE. Post-translationally, the N-terminal domain contains 6 conserved cysteines thought to be involved in disulfide bonding and/or processing. In terms of processing, proenkephalin-A is cleaved by CTSL to generate Met-enkephalin.

The protein localises to the cytoplasmic vesicle. Its subcellular location is the secretory vesicle. The protein resides in the chromaffin granule lumen. It localises to the secreted. Neuropeptide that competes with and mimic the effects of opiate drugs. They play a role in a number of physiologic functions, including pain perception and responses to stress. In Felis catus (Cat), this protein is Proenkephalin-A (PENK).